Reading from the N-terminus, the 198-residue chain is Ribosome maturation factor RimM (198 aa).

Residues 1–21 (MPPPTASTPDDSADPGPDFAD) are disordered. The PRC barrel domain maps to 122 to 195 (DDELFADDLV…RIVVRPIDGL (74 aa)).

It belongs to the RimM family. As to quaternary structure, binds ribosomal protein uS19.

It is found in the cytoplasm. In terms of biological role, an accessory protein needed during the final step in the assembly of 30S ribosomal subunit, possibly for assembly of the head region. Essential for efficient processing of 16S rRNA. May be needed both before and after RbfA during the maturation of 16S rRNA. It has affinity for free ribosomal 30S subunits but not for 70S ribosomes. The chain is Ribosome maturation factor RimM from Salinibacter ruber (strain DSM 13855 / M31).